A 139-amino-acid chain; its full sequence is uncharacterized protein (139 aa).

This is an uncharacterized protein from Encephalitozoon cuniculi (strain GB-M1) (Microsporidian parasite).